A 924-amino-acid polypeptide reads, in one-letter code: Cell division control protein 13 (924 aa).

Positions 265-336 are disordered; the sequence is PTTDISNMGE…KRKRKLSFHS (72 aa). Residues 295–308 show a composition bias toward polar residues; that stretch reads GKYFSSKSYIQSQT. Ser-306 carries the post-translational modification Phosphoserine. Thr-308 carries the phosphothreonine modification. Residues 309-326 are compositionally biased toward basic and acidic residues; it reads PERKTSVPNNWHDDDSGS. Residue Ser-333 is modified to Phosphoserine. The OB DNA-binding region spans 500–686; it reads KMARKDPTIE…FEEYRRFFPI (187 aa).

In terms of assembly, interacts with POL1, EST1, FUN12, STM1, STN1 and TEN1.

It is found in the chromosome. The protein localises to the telomere. Its function is as follows. Single-stranded telomeric DNA-binding protein that regulates telomere replication. Has a role in both positive and negative regulation. Promotes [TG(1-3)] strand lengthening via interaction with EST1. Promotes [C(1-3)A] strand re-synthesis by DNA polymerase alpha via interaction with POL1. Negatively regulates telomere elongation of the G strand via binding with STN1 thereby inhibiting telomerase activity. This is Cell division control protein 13 (CDC13) from Saccharomyces cerevisiae (strain ATCC 204508 / S288c) (Baker's yeast).